The chain runs to 413 residues: Ribosomal RNA large subunit methyltransferase G (413 aa).

Residues 389–413 (EAEVEQAFDTETPHPQSALYGKPKA) form a disordered region.

This sequence belongs to the methyltransferase superfamily. RlmG family.

It localises to the cytoplasm. It catalyses the reaction guanosine(1835) in 23S rRNA + S-adenosyl-L-methionine = N(2)-methylguanosine(1835) in 23S rRNA + S-adenosyl-L-homocysteine + H(+). Specifically methylates the guanine in position 1835 (m2G1835) of 23S rRNA. The protein is Ribosomal RNA large subunit methyltransferase G of Shewanella pealeana (strain ATCC 700345 / ANG-SQ1).